Consider the following 405-residue polypeptide: Serpin I2 (405 aa).

An N-terminal signal peptide occupies residues 1–18 (MNKTILWSFLLFFSGSQT). An N-linked (GlcNAc...) asparagine glycan is attached at asparagine 306.

This sequence belongs to the serpin family. In terms of tissue distribution, expressed in pancreas.

Its subcellular location is the secreted. This is Serpin I2 (Serpini2) from Mus musculus (Mouse).